The sequence spans 271 residues: Serine O-acetyltransferase (271 aa).

Cysteine 112 (acyl-thioester intermediate) is an active-site residue. The active-site Proton acceptor is histidine 204. The active site involves glutamate 206.

This sequence belongs to the MetA family.

It catalyses the reaction L-serine + acetyl-CoA = O-acetyl-L-serine + CoA. It functions in the pathway amino-acid biosynthesis; L-cysteine biosynthesis; L-cysteine from L-serine: step 1/2. Functionally, catalyzes the formation of O-acetylserine (OAS) from L-serine and acetyl-CoA. To a lesser extent, is also able to use succinyl-CoA and propionyl-CoA as acyl donors, but not butyryl-CoA. Does not acylate D-serine and L-homoserine. The chain is Serine O-acetyltransferase from Lacticaseibacillus casei (Lactobacillus casei).